A 193-amino-acid chain; its full sequence is Peptidyl-tRNA hydrolase (193 aa).

TRNA is bound at residue His17. Residue His22 is the Proton acceptor of the active site. Positions 68, 70, and 116 each coordinate tRNA.

This sequence belongs to the PTH family. Monomer.

It localises to the cytoplasm. The catalysed reaction is an N-acyl-L-alpha-aminoacyl-tRNA + H2O = an N-acyl-L-amino acid + a tRNA + H(+). Functionally, hydrolyzes ribosome-free peptidyl-tRNAs (with 1 or more amino acids incorporated), which drop off the ribosome during protein synthesis, or as a result of ribosome stalling. In terms of biological role, catalyzes the release of premature peptidyl moieties from peptidyl-tRNA molecules trapped in stalled 50S ribosomal subunits, and thus maintains levels of free tRNAs and 50S ribosomes. The protein is Peptidyl-tRNA hydrolase of Xanthomonas axonopodis pv. citri (strain 306).